The chain runs to 168 residues: Urease accessory protein UreE (168 aa).

The tract at residues 137–168 (PESGAYHGTTGHGGGHSHSHGHSHDHHHDHSH) is disordered. The span at 151–161 (GHSHSHGHSHD) shows a compositional bias: basic residues.

Belongs to the UreE family.

The protein resides in the cytoplasm. Functionally, involved in urease metallocenter assembly. Binds nickel. Probably functions as a nickel donor during metallocenter assembly. This is Urease accessory protein UreE from Saccharophagus degradans (strain 2-40 / ATCC 43961 / DSM 17024).